A 107-amino-acid chain; its full sequence is Putative double-stranded DNA mimic protein ECA2319 (107 aa).

Belongs to the putative dsDNA mimic protein family.

May act as a double-stranded DNA (dsDNA) mimic. Probably regulates the activity of a dsDNA-binding protein. This is Putative double-stranded DNA mimic protein ECA2319 from Pectobacterium atrosepticum (strain SCRI 1043 / ATCC BAA-672) (Erwinia carotovora subsp. atroseptica).